Consider the following 279-residue polypeptide: Large ribosomal subunit protein uL2 (279 aa).

A disordered region spans residues 223 to 279; sequence TVRGSAMNPNDHPHGGGEGRSPVGMDAPRTPWGKRHMGVKTRNNKKSSTSMIVRRRK. Basic residues predominate over residues 254-267; that stretch reads WGKRHMGVKTRNNK.

This sequence belongs to the universal ribosomal protein uL2 family. Part of the 50S ribosomal subunit. Forms a bridge to the 30S subunit in the 70S ribosome.

Its function is as follows. One of the primary rRNA binding proteins. Required for association of the 30S and 50S subunits to form the 70S ribosome, for tRNA binding and peptide bond formation. It has been suggested to have peptidyltransferase activity; this is somewhat controversial. Makes several contacts with the 16S rRNA in the 70S ribosome. The protein is Large ribosomal subunit protein uL2 of Ureaplasma parvum serovar 3 (strain ATCC 27815 / 27 / NCTC 11736).